The chain runs to 492 residues: N-succinylglutamate 5-semialdehyde dehydrogenase (492 aa).

220–225 (GSASTG) provides a ligand contact to NAD(+). Catalysis depends on residues Glu-243 and Cys-277.

Belongs to the aldehyde dehydrogenase family. AstD subfamily.

It catalyses the reaction N-succinyl-L-glutamate 5-semialdehyde + NAD(+) + H2O = N-succinyl-L-glutamate + NADH + 2 H(+). It participates in amino-acid degradation; L-arginine degradation via AST pathway; L-glutamate and succinate from L-arginine: step 4/5. In terms of biological role, catalyzes the NAD-dependent reduction of succinylglutamate semialdehyde into succinylglutamate. This chain is N-succinylglutamate 5-semialdehyde dehydrogenase, found in Salmonella enteritidis PT4 (strain P125109).